The following is a 151-amino-acid chain: Ribosome maturation factor RimP (151 aa).

Belongs to the RimP family.

The protein localises to the cytoplasm. In terms of biological role, required for maturation of 30S ribosomal subunits. In Pasteurella multocida (strain Pm70), this protein is Ribosome maturation factor RimP.